The primary structure comprises 394 residues: Elongation factor Tu (394 aa).

The tr-type G domain occupies 10–204 (KPHVNVGTIG…HLDSYIPEPE (195 aa)). The tract at residues 19-26 (GHVDHGKT) is G1. 19-26 (GHVDHGKT) contacts GTP. Mg(2+) is bound at residue Thr-26. Positions 60 to 64 (GITIN) are G2. The interval 81–84 (DCPG) is G3. Residues 81–85 (DCPGH) and 136–139 (NKCD) each bind GTP. The interval 136 to 139 (NKCD) is G4. The tract at residues 174 to 176 (SAL) is G5.

It belongs to the TRAFAC class translation factor GTPase superfamily. Classic translation factor GTPase family. EF-Tu/EF-1A subfamily. In terms of assembly, monomer.

It is found in the cytoplasm. It catalyses the reaction GTP + H2O = GDP + phosphate + H(+). In terms of biological role, GTP hydrolase that promotes the GTP-dependent binding of aminoacyl-tRNA to the A-site of ribosomes during protein biosynthesis. The chain is Elongation factor Tu from Haemophilus ducreyi (strain 35000HP / ATCC 700724).